The following is a 292-amino-acid chain: NAD kinase (292 aa).

Catalysis depends on Asp-73, which acts as the Proton acceptor. Residues Asp-73–Gly-74, Asn-147–Glu-148, His-158, Arg-175, Asp-177, Thr-188–Ser-193, and Gln-247 contribute to the NAD(+) site.

This sequence belongs to the NAD kinase family. The cofactor is a divalent metal cation.

It localises to the cytoplasm. It catalyses the reaction NAD(+) + ATP = ADP + NADP(+) + H(+). Its function is as follows. Involved in the regulation of the intracellular balance of NAD and NADP, and is a key enzyme in the biosynthesis of NADP. Catalyzes specifically the phosphorylation on 2'-hydroxyl of the adenosine moiety of NAD to yield NADP. This Klebsiella pneumoniae subsp. pneumoniae (strain ATCC 700721 / MGH 78578) protein is NAD kinase.